We begin with the raw amino-acid sequence, 401 residues long: Acetate kinase (401 aa).

N7 is a binding site for Mg(2+). K14 lines the ATP pocket. Residue R90 coordinates substrate. The active-site Proton donor/acceptor is D147. Residues 207–211 (HLGNG), 282–284 (DFR), and 330–334 (GVGEN) each bind ATP. E383 lines the Mg(2+) pocket.

Belongs to the acetokinase family. As to quaternary structure, homodimer. The cofactor is Mg(2+). It depends on Mn(2+) as a cofactor.

It localises to the cytoplasm. The enzyme catalyses acetate + ATP = acetyl phosphate + ADP. Its pathway is metabolic intermediate biosynthesis; acetyl-CoA biosynthesis; acetyl-CoA from acetate: step 1/2. Catalyzes the formation of acetyl phosphate from acetate and ATP. Can also catalyze the reverse reaction. This Clostridium novyi (strain NT) protein is Acetate kinase.